Consider the following 78-residue polypeptide: Defensin-like protein 149 (78 aa).

Residues 1–25 (MMKKLIQLSFTVMIIFTILVLGVVA) form the signal peptide. Disulfide bonds link Cys-36–Cys-77, Cys-45–Cys-65, Cys-50–Cys-71, and Cys-54–Cys-73.

It belongs to the DEFL family.

The protein localises to the secreted. The chain is Defensin-like protein 149 (LCR5) from Arabidopsis thaliana (Mouse-ear cress).